We begin with the raw amino-acid sequence, 146 residues long: Ribonuclease H (146 aa).

The RNase H type-1 domain occupies 1–141 (MEKIDIFTDG…ADALANRGVE (141 aa)). Positions 9, 47, 69, and 133 each coordinate Mg(2+).

Belongs to the RNase H family. In terms of assembly, monomer. Mg(2+) serves as cofactor.

It localises to the cytoplasm. The catalysed reaction is Endonucleolytic cleavage to 5'-phosphomonoester.. Functionally, endonuclease that specifically degrades the RNA of RNA-DNA hybrids. In Herminiimonas arsenicoxydans, this protein is Ribonuclease H.